Here is a 445-residue protein sequence, read N- to C-terminus: Aminopeptidase S (445 aa).

An N-terminal signal peptide occupies residues 1–45 (MRPNRFSLRRSPTAVAAVALAAVLAAGAPAAQAAGAAAPTAAAAA). Positions 48 and 49 each coordinate Ca(2+). 2 residues coordinate Zn(2+): H130 and D142. The active-site Proton acceptor is E176. Residues E177, D205, and H292 each coordinate Zn(2+). C290 and C295 are joined by a disulfide. D307 and D311 together coordinate Ca(2+). Residues 325 to 445 (GEPPTGEGVF…GYIDSWKLTF (121 aa)) form the P/Homo B domain. Residues 330 to 445 (GEGVFSNTTD…GYIDSWKLTF (116 aa)) constitute a propeptide, removed in mature form.

It belongs to the peptidase M28 family. M28A subfamily. Monomer. Ca(2+) serves as cofactor. Requires Zn(2+) as cofactor. Mn(2+) is required as a cofactor. It depends on Co(2+) as a cofactor.

It localises to the secreted. It carries out the reaction Release of an N-terminal amino acid with a preference for large hydrophobic amino-terminus residues.. Its activity is regulated as follows. Calcium activates the enzyme, inhibited by 1,10-phenanthroline, EDTA and EGTA. End-product inhibited by L-amino acids. Non-competitively inhibited by NaF and NaH(2)PO(4). Its function is as follows. An exopeptidase specific for larger hydrophobic amino acids (especially leucine), no cleavage occurs if the next residue is proline. The sequence is that of Aminopeptidase S from Streptomyces griseus subsp. griseus (strain JCM 4626 / CBS 651.72 / NBRC 13350 / KCC S-0626 / ISP 5235).